The chain runs to 153 residues: Large ribosomal subunit protein uL22 (153 aa).

It belongs to the universal ribosomal protein uL22 family. As to quaternary structure, part of the 50S ribosomal subunit.

Its function is as follows. This protein binds specifically to 23S rRNA. It makes multiple contacts with different domains of the 23S rRNA in the assembled 50S subunit and ribosome. Functionally, the globular domain of the protein is located near the polypeptide exit tunnel on the outside of the subunit, while an extended beta-hairpin is found that lines the wall of the exit tunnel in the center of the 70S ribosome. This Methanoculleus marisnigri (strain ATCC 35101 / DSM 1498 / JR1) protein is Large ribosomal subunit protein uL22.